Reading from the N-terminus, the 496-residue chain is Xylulose kinase (496 aa).

Residue 83–84 (MH) coordinates substrate. Residue aspartate 237 is the Proton acceptor of the active site.

Belongs to the FGGY kinase family.

It catalyses the reaction D-xylulose + ATP = D-xylulose 5-phosphate + ADP + H(+). In terms of biological role, catalyzes the phosphorylation of D-xylulose to D-xylulose 5-phosphate. This Staphylococcus epidermidis (strain ATCC 12228 / FDA PCI 1200) protein is Xylulose kinase.